Here is a 306-residue protein sequence, read N- to C-terminus: Homoserine kinase (306 aa).

88–98 provides a ligand contact to ATP; it reads PLARGLGSSAT.

Belongs to the GHMP kinase family. Homoserine kinase subfamily.

Its subcellular location is the cytoplasm. It carries out the reaction L-homoserine + ATP = O-phospho-L-homoserine + ADP + H(+). The protein operates within amino-acid biosynthesis; L-threonine biosynthesis; L-threonine from L-aspartate: step 4/5. Functionally, catalyzes the ATP-dependent phosphorylation of L-homoserine to L-homoserine phosphate. The chain is Homoserine kinase from Synechococcus sp. (strain ATCC 27144 / PCC 6301 / SAUG 1402/1) (Anacystis nidulans).